Reading from the N-terminus, the 606-residue chain is Probable potassium transport system protein Kup (606 aa).

12 helical membrane passes run Gly18–Leu38, Val46–Ala66, Leu97–Ile117, Gly138–Phe158, Val166–Ala186, Gly212–Leu232, Ala247–Ile267, Leu287–Ile307, Ile339–Phe359, Ala368–Leu388, Trp395–Leu415, and Leu418–Val438.

The protein belongs to the HAK/KUP transporter (TC 2.A.72) family.

Its subcellular location is the cell inner membrane. The catalysed reaction is K(+)(in) + H(+)(in) = K(+)(out) + H(+)(out). Functionally, transport of potassium into the cell. Likely operates as a K(+):H(+) symporter. The sequence is that of Probable potassium transport system protein Kup from Trichlorobacter lovleyi (strain ATCC BAA-1151 / DSM 17278 / SZ) (Geobacter lovleyi).